The chain runs to 272 residues: HMP-PP phosphatase (272 aa).

Asp8 (nucleophile) is an active-site residue. 3 residues coordinate Mg(2+): Asp8, Asp10, and Asp212.

Belongs to the HAD-like hydrolase superfamily. Cof family. Mg(2+) serves as cofactor.

The catalysed reaction is 4-amino-2-methyl-5-(diphosphooxymethyl)pyrimidine + H2O = 4-amino-2-methyl-5-(phosphooxymethyl)pyrimidine + phosphate + H(+). Functionally, catalyzes the hydrolysis of 4-amino-2-methyl-5-hydroxymethylpyrimidine pyrophosphate (HMP-PP) to 4-amino-2-methyl-5-hydroxymethylpyrimidine phosphate (HMP-P). The polypeptide is HMP-PP phosphatase (Salmonella schwarzengrund (strain CVM19633)).